Reading from the N-terminus, the 65-residue chain is Putative cytochrome c oxidase subunit 5C-4 (65 aa).

A helical membrane pass occupies residues 20–37; sequence EIIYGITLGFAVGGLWKM.

It belongs to the cytochrome c oxidase subunit 5C family.

Its subcellular location is the mitochondrion inner membrane. Functionally, this protein is one of the nuclear-coded polypeptide chains of cytochrome c oxidase, the terminal oxidase in mitochondrial electron transport. The chain is Putative cytochrome c oxidase subunit 5C-4 from Arabidopsis thaliana (Mouse-ear cress).